Consider the following 397-residue polypeptide: MKAVGLVTEYNPFHNGHIYHIQQAKAVTGADVVIAVMSGNFVQRGEPALFDKWTRTQAALANGVDLVIELPTFYAVQPSHLFAEGAIKLLTALGVEDVVFGSEHATVDFLNLAKQAPSVQGGKAFQEKNQTFAQAYATQLESETGFKLEDPNDILAFGYAKAILNLNSPIKLHAIQRVAAGYHDQSFTDDQTIASASSIRLALHKGKLEKVKGVVPNQTLVDISSANHTVDFESQFWPLLKYRLMTDTIGQLGQVYQMAEGLEHRLAAVALGEPGPQSYQSFIKAVKSKRYTFARIQRTLLYTLLNVKVDQMQAAMQDPYLRILGFTDKGQAYLNGAKKTTTLPLISKVDQHLAKANLRLDFKAGKLWQLLAREPGQQQDIARQPIHFTQAHTKEDK.

Residues 7-20, glycine 101, asparagine 152, and arginine 177 each bind ATP; that span reads VTEY…HIYH.

This sequence belongs to the TmcAL family.

It is found in the cytoplasm. The enzyme catalyses cytidine(34) in elongator tRNA(Met) + acetate + ATP = N(4)-acetylcytidine(34) in elongator tRNA(Met) + AMP + diphosphate. Catalyzes the formation of N(4)-acetylcytidine (ac(4)C) at the wobble position of elongator tRNA(Met), using acetate and ATP as substrates. First activates an acetate ion to form acetyladenylate (Ac-AMP) and then transfers the acetyl group to tRNA to form ac(4)C34. This is tRNA(Met) cytidine acetate ligase from Leuconostoc citreum (strain KM20).